The following is a 490-amino-acid chain: NADP-reducing hydrogenase subunit HndC (490 aa).

4Fe-4S ferredoxin-type domains lie at 433–462 (LTYT…GTKK) and 463–490 (QPHT…IIKQ).

The protein belongs to the complex I 51 kDa subunit family. Heterotetramer composed of HndA, HndB, HndC and HndD subunits. HndC is probably the reducing subunit.

It carries out the reaction H2 + NADP(+) = NADPH + H(+). Inhibited by oxygen. Functionally, catalyzes the reduction of NADP in the presence of molecular H2 to yield NADPH. In Solidesulfovibrio fructosivorans (Desulfovibrio fructosivorans), this protein is NADP-reducing hydrogenase subunit HndC (hndC).